The sequence spans 442 residues: Protein phosphatase 2C 3 (442 aa).

Residues 30–100 form a disordered region; it reads RFRMSPSEMN…VSISDGNSSV (71 aa). Over residues 79 to 90 the composition is skewed to acidic residues; sequence PEEESVSLEDSD. A PPM-type phosphatase domain is found at 120–433; it reads RYGVASVCGR…DNVSVVVIDL (314 aa). Residues Asp-162, Gly-163, and Asp-339 each coordinate Mn(2+). Residues 363-401 form a disordered region; it reads GRGRRRGETQTPGRRSEEEGKEEEEKVVGSRKNGKRGEI. Positions 376–390 are enriched in basic and acidic residues; that stretch reads RRSEEEGKEEEEKVV. Asp-424 is a binding site for Mn(2+).

The protein belongs to the PP2C family. Part of a K(+)-channel calcium-sensing kinase/phosphatase complex composed by a calcium sensor CBL (CBL1, CBL2, CBL3 or CBL9), a kinase CIPK (CIPK6, CIPK16 or CIPK23), a phosphatase PP2C (AIP1) and a K(+)-channel (AKT1). Interacts with AKT1 and CIPK23. Interacts with PYL8/RCAR3 in an abscisic acid-independent. Interacts with PYR1/RCAR11 in an abscisic acid-dependent manner. It depends on Mg(2+) as a cofactor. Mn(2+) is required as a cofactor. As to expression, expressed in shoot meristem, vascular tissues of cotyledons, and in primary roots surrounding the root meristem. Highly expressed in seeds.

The protein localises to the cell membrane. Its subcellular location is the cytoplasm. The protein resides in the nucleus. The enzyme catalyses O-phospho-L-seryl-[protein] + H2O = L-seryl-[protein] + phosphate. It catalyses the reaction O-phospho-L-threonyl-[protein] + H2O = L-threonyl-[protein] + phosphate. In terms of biological role, involved in the negative regulation of the K(+) potassium channel AKT1 by its dephosphorylation, antagonistically to CIPK proteins (e.g. CIPK23). Functions as a positive regulator of abscisic acid-mediated cell signaling during seedling growth. Involved in the regulation of seed dormancy. Acts as a negative regulator of seed dormancy by inhibiting abscisic signaling and subsequently activating gibberellic acid signaling. The sequence is that of Protein phosphatase 2C 3 from Arabidopsis thaliana (Mouse-ear cress).